The sequence spans 29 residues: Glucagon (29 aa).

This sequence belongs to the glucagon family.

It localises to the secreted. Its function is as follows. Promotes hydrolysis of glycogen and lipids, and raises the blood sugar level. The chain is Glucagon (gcg) from Torpedo marmorata (Marbled electric ray).